Here is a 352-residue protein sequence, read N- to C-terminus: Tropomodulin-3 (352 aa).

Ser25 is modified (phosphoserine).

Belongs to the tropomodulin family. In terms of assembly, binds to the N-terminus of tropomyosin and to actin. Interacts with FLII. Ubiquitous.

The protein localises to the cytoplasm. The protein resides in the cytoskeleton. In terms of biological role, blocks the elongation and depolymerization of the actin filaments at the pointed end. The Tmod/TM complex contributes to the formation of the short actin protofilament, which in turn defines the geometry of the membrane skeleton. The sequence is that of Tropomodulin-3 (TMOD3) from Homo sapiens (Human).